A 344-amino-acid polypeptide reads, in one-letter code: Uroporphyrinogen decarboxylase (344 aa).

Substrate is bound by residues 24-28, Phe43, Asp74, Tyr151, Ser206, and His323; that span reads RQAGR.

Belongs to the uroporphyrinogen decarboxylase family. Homodimer.

Its subcellular location is the cytoplasm. The catalysed reaction is uroporphyrinogen III + 4 H(+) = coproporphyrinogen III + 4 CO2. The protein operates within porphyrin-containing compound metabolism; protoporphyrin-IX biosynthesis; coproporphyrinogen-III from 5-aminolevulinate: step 4/4. Functionally, catalyzes the decarboxylation of four acetate groups of uroporphyrinogen-III to yield coproporphyrinogen-III. In Rhodobacter capsulatus (Rhodopseudomonas capsulata), this protein is Uroporphyrinogen decarboxylase.